A 247-amino-acid polypeptide reads, in one-letter code: Complement C1q subcomponent subunit B (247 aa).

Positions 1–22 (MKTPRGSVLVLLLLNLLRVSWA) are cleaved as a signal peptide. The residue at position 23 (Gln-23) is a Pyrrolidone carboxylic acid. 4-hydroxyproline occurs at positions 29, 32, 35, 47, and 50. A disordered region spans residues 30-78 (SIPGIPGIPGKPGSDGKPGTPGTKGEKGLPGLVSHLNENGEKGDPGFPG). A Collagen-like domain is found at 39–98 (GKPGSDGKPGTPGTKGEKGLPGLVSHLNENGEKGDPGFPGMPGKVGPKGPIGPKGVPGPP). Residues 40-52 (KPGSDGKPGTPGT) show a composition bias toward low complexity. 2 positions are modified to 5-hydroxylysine: Lys-53 and Lys-56. A 4-hydroxyproline modification is found at Pro-59. Lys-71 carries the post-translational modification 5-hydroxylysine. Pro-77 and Pro-80 each carry 4-hydroxyproline. 5-hydroxylysine occurs at positions 86 and 92. A 4-hydroxyproline mark is found at Pro-95 and Pro-98. Position 104 is a 5-hydroxylysine (Lys-104). The C1q domain maps to 111–247 (KATQKIAFSA…GFMLFPDTEA (137 aa)). Cys-175 and Cys-192 form a disulfide bridge. Asp-193, Tyr-194, and Gln-200 together coordinate Ca(2+).

Core component of the complement C1 complex, a calcium-dependent complex composed of 1 molecule of the C1Q subcomplex, 2 molecules of C1R and 2 molecules of C1S. The C1Q subcomplex is composed 18 subunits: 3 chains of C1QA, C1QB, and C1QC trimerize to form 6 collagen-like triple helices connected to six globular ligand-recognition modules (C1q domain). In terms of processing, hydroxylated on lysine and proline residues. Hydroxylated lysine residues can be glycosylated. Bovine C1Q contains up to 66.3 hydroxylysine-galactosylglucose residues. Total percentage hydroxylysine residues glycosylated is 92.0%. Contains no hydroxylysine-monosaccharides.

It localises to the secreted. The protein resides in the cell surface. Its activity is regulated as follows. The C1Q subcomplex is inhibited by sulfated molecules, such as triterpenoid sulfates, heparan sulfate, or chondroitin sulfates. In terms of biological role, core component of the complement C1 complex, a multiprotein complex that initiates the classical pathway of the complement system, a cascade of proteins that leads to phagocytosis and breakdown of pathogens and signaling that strengthens the adaptive immune system. The classical complement pathway is initiated by the C1Q subcomplex of the C1 complex, which specifically binds IgG or IgM immunoglobulins complexed with antigens, forming antigen-antibody complexes on the surface of pathogens: C1QA, together with C1QB and C1QC, specifically recognizes and binds the Fc regions of IgG or IgM via its C1q domain. Immunoglobulin-binding activates the proenzyme C1R, which cleaves C1S, initiating the proteolytic cascade of the complement system. The C1Q subcomplex is activated by a hexamer of IgG complexed with antigens, while it is activated by a pentameric IgM. The C1Q subcomplex also recognizes and binds phosphatidylserine exposed on the surface of cells undergoing programmed cell death, possibly promoting activation of the complement system. This chain is Complement C1q subcomponent subunit B (C1QB), found in Bos taurus (Bovine).